The chain runs to 275 residues: Ribosomal RNA small subunit methyltransferase A (275 aa).

S-adenosyl-L-methionine is bound by residues Asn19, Leu21, Gly46, Glu71, Asp94, and Asn117.

The protein belongs to the class I-like SAM-binding methyltransferase superfamily. rRNA adenine N(6)-methyltransferase family. RsmA subfamily.

The protein localises to the cytoplasm. It carries out the reaction adenosine(1518)/adenosine(1519) in 16S rRNA + 4 S-adenosyl-L-methionine = N(6)-dimethyladenosine(1518)/N(6)-dimethyladenosine(1519) in 16S rRNA + 4 S-adenosyl-L-homocysteine + 4 H(+). In terms of biological role, specifically dimethylates two adjacent adenosines (A1518 and A1519) in the loop of a conserved hairpin near the 3'-end of 16S rRNA in the 30S particle. May play a critical role in biogenesis of 30S subunits. This is Ribosomal RNA small subunit methyltransferase A from Burkholderia pseudomallei (strain 668).